A 426-amino-acid chain; its full sequence is Glutamate-1-semialdehyde 2,1-aminomutase (426 aa).

At K267 the chain carries N6-(pyridoxal phosphate)lysine.

Belongs to the class-III pyridoxal-phosphate-dependent aminotransferase family. HemL subfamily. Homodimer. Pyridoxal 5'-phosphate serves as cofactor.

The protein resides in the cytoplasm. It carries out the reaction (S)-4-amino-5-oxopentanoate = 5-aminolevulinate. It functions in the pathway porphyrin-containing compound metabolism; protoporphyrin-IX biosynthesis; 5-aminolevulinate from L-glutamyl-tRNA(Glu): step 2/2. This is Glutamate-1-semialdehyde 2,1-aminomutase from Bdellovibrio bacteriovorus (strain ATCC 15356 / DSM 50701 / NCIMB 9529 / HD100).